Here is a 643-residue protein sequence, read N- to C-terminus: Thread biopolymer filament subunit alpha (643 aa).

Over residues 1–13 the composition is skewed to polar residues; the sequence is MSISQTVSKSYTK. The disordered stretch occupies residues 1 to 34; that stretch reads MSISQTVSKSYTKSVSRGGQGVSYSQSSSHKVGG. The interval 1 to 191 is head; sequence MSISQTVSKS…PDTVQHTRIR (191 aa). A compositionally biased stretch (low complexity) spans 14–31; the sequence is SVSRGGQGVSYSQSSSHK. The region spanning 192–510 is the IF rod domain; it reads EKQDLQTLNT…KLLDSEETRI (319 aa). Residues 193 to 227 form a coil 1A region; sequence KQDLQTLNTKFANLVDQVRTLEQHNAILKAQISMI. Residues 228 to 240 form a linker 1 region; that stretch reads TSPSDTPEGPVNT. A coil 1B region spans residues 241 to 341; sequence AVVASTVTAT…YNARVREVQA (101 aa). Residues 342-362 are linker 12; that stretch reads AVTGGPTAAYSIRVDNTHQAI. The tract at residues 363–381 is coil 2A; sequence DLTTSLQEMKTHYEVLATK. The linker 2 stretch occupies residues 382 to 389; the sequence is SREEAFTQ. Positions 390–510 are coil 2B; sequence VQPRIQEMAV…KLLDSEETRI (121 aa). Residues 511–643 form a tail region; it reads SHGGGITITT…SSARSSSRIY (133 aa). The tract at residues 622-643 is disordered; that stretch reads SRAGYSASRKSYSSARSSSRIY.

It belongs to the intermediate filament family. In terms of assembly, coiled-coil heterodimer of an alpha and a gamma subunit. Assemble into 10 nm filaments. Forms a massive, conical, intermediate filament biopolymer of approximately 60 cm.

It localises to the secreted. The protein localises to the extracellular space. In terms of biological role, released extracellularly into seawater and provides physical and biological defense against invasive organism by modulation of the viscoelastic properties of mucus. This is Thread biopolymer filament subunit alpha from Eptatretus stoutii (Pacific hagfish).